We begin with the raw amino-acid sequence, 523 residues long: Arabinose import ATP-binding protein AraG (523 aa).

2 consecutive ABC transporter domains span residues 20–255 (LAFR…MVGR) and 268–511 (IGSE…MLRT). 52 to 59 (GENGAGKS) provides a ligand contact to ATP.

Belongs to the ABC transporter superfamily. Arabinose importer (TC 3.A.1.2.2) family. In terms of assembly, the complex is composed of two ATP-binding proteins (AraG), two transmembrane proteins (AraH) and a solute-binding protein (AraF).

It localises to the cell inner membrane. It catalyses the reaction L-arabinose(out) + ATP + H2O = L-arabinose(in) + ADP + phosphate + H(+). In terms of biological role, part of the ABC transporter complex AraFGH involved in arabinose import. Responsible for energy coupling to the transport system. This is Arabinose import ATP-binding protein AraG from Yersinia pestis bv. Antiqua (strain Antiqua).